A 395-amino-acid polypeptide reads, in one-letter code: Isoafricanol synthase (395 aa).

Mg(2+)-binding residues include Asp95, Asn246, Ser250, and Glu254. The segment covering 346–357 (TEAVSGGRERPW) has biased composition (basic and acidic residues). A disordered region spans residues 346–395 (TEAVSGGRERPWARLTGAEDLIRAGRGAPPPPGSGPDTRQPMPSEPSQLA).

The protein belongs to the terpene synthase family. Mg(2+) is required as a cofactor.

It carries out the reaction (2E,6E)-farnesyl diphosphate + H2O = (+)-isoafricanol + diphosphate. Catalyzes the cyclization of farnesyl diphosphate (FPP) to isoafricanol. This chain is Isoafricanol synthase, found in Streptomyces malaysiensis.